The chain runs to 149 residues: Large ribosomal subunit protein bL9 (149 aa).

This sequence belongs to the bacterial ribosomal protein bL9 family.

Functionally, binds to the 23S rRNA. The chain is Large ribosomal subunit protein bL9 from Helicobacter pylori (strain HPAG1).